Here is a 234-residue protein sequence, read N- to C-terminus: UPF0173 metal-dependent hydrolase Meso_1362 (234 aa).

The protein belongs to the UPF0173 family.

The chain is UPF0173 metal-dependent hydrolase Meso_1362 from Chelativorans sp. (strain BNC1).